A 515-amino-acid chain; its full sequence is AAA ATPase forming ring-shaped complexes (515 aa).

Residues 2 to 49 (NDHDEETLASLQQANDQLMAKNHALVKALSRATQEMTKTKAQLNQLAG) adopt a coiled-coil conformation. 240–245 (GNGKTL) serves as a coordination point for ATP.

The protein belongs to the AAA ATPase family. Homohexamer. Assembles into a hexameric ring structure.

This is AAA ATPase forming ring-shaped complexes from Bifidobacterium adolescentis (strain ATCC 15703 / DSM 20083 / NCTC 11814 / E194a).